A 424-amino-acid polypeptide reads, in one-letter code: UPF0229 protein YPTS_2141 (424 aa).

The tract at residues 84–109 (TNDRVDRPQGGGGGGSGQGNAGKDGE) is disordered. The segment covering 92-105 (QGGGGGGSGQGNAG) has biased composition (gly residues).

Belongs to the UPF0229 family.

The sequence is that of UPF0229 protein YPTS_2141 from Yersinia pseudotuberculosis serotype IB (strain PB1/+).